The primary structure comprises 591 residues: Pentatricopeptide repeat-containing protein At3g47530 (591 aa).

9 PPR repeats span residues 76–110, 112–146, 147–177, 178–208, 216–250, 251–281, 282–316, 317–351, and 354–384; these read TLSH…SSLP, NPLS…GFLS, DSLL…IPKR, DTVS…MKND, DGVT…GLSG, ALNL…MRER, NVVS…GISP, EEQT…EFKI, and NLHH…MEMK. Residues 389–464 are type E motif; it reads IWRTLLGACR…KPGCSAIELQ (76 aa). Positions 465–495 are type E(+) motif; that stretch reads GTVHEFIVDDVSHPRKEEIYKMLAEINQQLK. The segment at 496-591 is type DYW motif; the sequence is IAGYVAEITS…GGSCSCNDFW (96 aa).

The protein belongs to the PPR family. PCMP-H subfamily.

This is Pentatricopeptide repeat-containing protein At3g47530 (PCMP-H76) from Arabidopsis thaliana (Mouse-ear cress).